A 357-amino-acid polypeptide reads, in one-letter code: Hyaluronidase (357 aa).

The signal sequence occupies residues 1 to 26; the sequence is MLLVTLFLFFLQALVNGDSCGSNCEK. Disulfide bonds link Cys-45–Cys-334 and Cys-211–Cys-223. N-linked (GlcNAc...) asparagine glycosylation is found at Asn-105 and Asn-125. Glu-135 acts as the Proton donor in catalysis. An N-linked (GlcNAc...) asparagine glycan is attached at Asn-153. Asn-351 is a glycosylation site (N-linked (GlcNAc...) asparagine).

The protein belongs to the glycosyl hydrolase 56 family.

Its subcellular location is the secreted. The catalysed reaction is Random hydrolysis of (1-&gt;4)-linkages between N-acetyl-beta-D-glucosamine and D-glucuronate residues in hyaluronate.. Functionally, hydrolyzes high molecular weight hyaluronic acid to produce small oligosaccharides. The protein is Hyaluronidase of Vespa magnifica (Hornet).